Consider the following 515-residue polypeptide: ATP synthase subunit alpha (515 aa).

169 to 176 is a binding site for ATP; it reads GDRQTGKT.

This sequence belongs to the ATPase alpha/beta chains family. In terms of assembly, F-type ATPases have 2 components, CF(1) - the catalytic core - and CF(0) - the membrane proton channel. CF(1) has five subunits: alpha(3), beta(3), gamma(1), delta(1), epsilon(1). CF(0) has three main subunits: a(1), b(2) and c(9-12). The alpha and beta chains form an alternating ring which encloses part of the gamma chain. CF(1) is attached to CF(0) by a central stalk formed by the gamma and epsilon chains, while a peripheral stalk is formed by the delta and b chains.

It is found in the cell inner membrane. The enzyme catalyses ATP + H2O + 4 H(+)(in) = ADP + phosphate + 5 H(+)(out). Functionally, produces ATP from ADP in the presence of a proton gradient across the membrane. The alpha chain is a regulatory subunit. This is ATP synthase subunit alpha from Neisseria meningitidis serogroup C (strain 053442).